A 335-amino-acid chain; its full sequence is Expansin-like protein 3 (335 aa).

Positions 1–20 (MKFNTIFLVLSIVKFILISA) are cleaved as a signal peptide. At 21 to 314 (QSCPFSQSII…LNENENIESN (294 aa)) the chain is on the extracellular side. The region spanning 43–143 (AGNCGFEKLN…VKVPCEVSGN (101 aa)) is the Expansin-like EG45 domain. 2 disulfides stabilise this stretch: Cys46–Cys76 and Cys79–Cys138. Residue Asn87 is glycosylated (N-linked (GlcNAc...) asparagine). The segment at 247-276 (YKPQTFNSQQTSNNQNSNTQTPTKQPSPNS) is disordered. The segment covering 249–272 (PQTFNSQQTSNNQNSNTQTPTKQP) has biased composition (low complexity). Residues 315–335 (SLKLLPNFLLLILIILLNINF) traverse the membrane as a helical segment.

This sequence belongs to the expansin family. Expansin A subfamily.

It localises to the membrane. Functionally, may serve to lubricate the movement of the cellulose microfibrils during cell growth and wall extension and/or may serve to maintain the fluid state of the slug cell wall. This is Expansin-like protein 3 (expl3) from Dictyostelium discoideum (Social amoeba).